We begin with the raw amino-acid sequence, 1265 residues long: Nestin (1265 aa).

Residues 1 to 16 (MELLGVRQPFGPQFQE) form a head region. The coil 1A stretch occupies residues 17–52 (EKYQMLELNHRLESYLGRVKLLEEENKLLREEIHTL). An IF rod domain is found at 17-324 (EKYQMLELNH…ALLDSEGLRI (308 aa)). Positions 53 to 64 (KSSRDPAGQRKA) are linker 1. Residues 65-160 (QEEALSQARR…QVHQENMETM (96 aa)) are coil 1B. Residues 161–183 (QASLKQTKQVLMAPQRVQATSIP) form a linker 12 region. Residues 184–203 (DLGQEYGYKAAQAWQEAANN) are coil 2A. The tract at residues 204–206 (YQK) is linker 2. The coil 2B stretch occupies residues 207-324 (QVGRLEESLN…ALLDSEGLRI (118 aa)). The segment at 325 to 1265 (DRPTPNKTSS…EGDSWSSGDE (941 aa)) is tail. A compositionally biased stretch (polar residues) spans 383-402 (PSWTLTRGTPQRPPSSTSMT). Disordered stretches follow at residues 383 to 521 (PSWT…TEVS), 667 to 830 (FEVE…PDME), 863 to 1073 (HESL…KASQ), 1093 to 1116 (AQTT…LESS), and 1232 to 1265 (IRDD…SGDE). Basic and acidic residues predominate over residues 403 to 418 (EKTEDHISEETKRSAE). Over residues 422 to 441 (DQLQQEKVQQDWTLESTLPK) the composition is skewed to polar residues. Positions 444–459 (AEPKPELQPEEIKVED) are enriched in basic and acidic residues. Polar residues predominate over residues 479-496 (LTSVPAEQQGSMSQTPET). 2 stretches are compositionally biased toward acidic residues: residues 508–520 (EVSE…DTEV) and 730–739 (LNEDQSEAEE). 3 stretches are compositionally biased toward basic and acidic residues: residues 784 to 796 (YKSD…HIGE), 803 to 819 (EKER…RFNT), and 863 to 897 (HESL…KEED). Residues 901–910 (FEQNENQQLT) are compositionally biased toward polar residues. Basic and acidic residues predominate over residues 911-935 (EHQHVHTEQVEDKPVHSHETQEHVN). Over residues 943–956 (SERSQQEQLEESSL) the composition is skewed to low complexity. Residues 1015-1043 (PNASQCFQNTSLLAAATPNEQPLTFTNEV) show a composition bias toward polar residues. Positions 1061-1070 (SEEKSTDEPK) are enriched in basic and acidic residues. 2 stretches are compositionally biased toward polar residues: residues 1105-1116 (SISPVNENLESS) and 1242-1251 (PAQSKIVQSD). Residues 1252 to 1265 (DSADEGDSWSSGDE) show a composition bias toward acidic residues.

The protein belongs to the intermediate filament family. Forms homodimers and homotetramers in vitro. In mixtures with other intermediate filament proteins such as vimentin and alpha-internexin, preferentially forms heterodimers. Widely expressed throughout the developing nervous system at 24 hours post-fertilization (hpf). As development progresses, expression becomes restricted to proliferative zones of the developing and postembryonic central nervous system. In the peripheral nervous system, expressed in the cranial ganglia. Also expressed in mesodermal muscle precursor cells and in cranial mesenchymal tissue.

Its function is as follows. Promotes the disassembly of phosphorylated vimentin intermediate filaments (IF) during mitosis and may play a role in the trafficking and distribution of IF proteins and other cellular factors to daughter cells during progenitor cell division. Required for survival, renewal and mitogen-stimulated proliferation of neural progenitor cells. Required for brain and eye development. This Danio rerio (Zebrafish) protein is Nestin (nes).